A 324-amino-acid chain; its full sequence is Protoheme IX farnesyltransferase 2 (324 aa).

The next 9 membrane-spanning stretches (helical) occupy residues 39–59, 63–83, 115–135, 137–157, 166–186, 192–212, 239–259, 260–280, and 302–322; these read LIKPRVIELLLVTTIPAMLLA, IPSPWLVIATLVGGTMAAGSA, HALVFGIALGAGSFGWLWATT, LLSAVLAVATILFYVFVYTLV, IVWGGAAGCMPVVIGWAGVTG, ALVMFGIIFFWTPPHTWSLAM, IVVFTWLMVLWTLLLAPATGW, LYTAFAIAAGAWFLVLAHRLH, and LMIVCVALAVDSALSLPVLGW.

The protein belongs to the UbiA prenyltransferase family. Protoheme IX farnesyltransferase subfamily.

Its subcellular location is the cell membrane. The catalysed reaction is heme b + (2E,6E)-farnesyl diphosphate + H2O = Fe(II)-heme o + diphosphate. It participates in porphyrin-containing compound metabolism; heme O biosynthesis; heme O from protoheme: step 1/1. Functionally, converts heme B (protoheme IX) to heme O by substitution of the vinyl group on carbon 2 of heme B porphyrin ring with a hydroxyethyl farnesyl side group. The chain is Protoheme IX farnesyltransferase 2 from Saccharopolyspora erythraea (strain ATCC 11635 / DSM 40517 / JCM 4748 / NBRC 13426 / NCIMB 8594 / NRRL 2338).